The sequence spans 561 residues: Urocanate hydratase (561 aa).

NAD(+)-binding positions include 52-53, Gln-130, 176-178, Glu-196, Arg-201, 242-243, 263-267, 273-274, and Tyr-322; these read GG, GMG, NA, QTSAH, and YL. Cys-410 is a catalytic residue. Gly-492 provides a ligand contact to NAD(+).

It belongs to the urocanase family. Requires NAD(+) as cofactor.

The protein localises to the cytoplasm. It catalyses the reaction 4-imidazolone-5-propanoate = trans-urocanate + H2O. It functions in the pathway amino-acid degradation; L-histidine degradation into L-glutamate; N-formimidoyl-L-glutamate from L-histidine: step 2/3. In terms of biological role, catalyzes the conversion of urocanate to 4-imidazolone-5-propionate. In Enterobacter sp. (strain 638), this protein is Urocanate hydratase.